A 181-amino-acid polypeptide reads, in one-letter code: Peptidyl-tRNA hydrolase (181 aa).

TRNA is bound at residue Y14. H19 serves as the catalytic Proton acceptor. Residues Y62, N64, and N108 each coordinate tRNA.

The protein belongs to the PTH family. Monomer.

The protein resides in the cytoplasm. It carries out the reaction an N-acyl-L-alpha-aminoacyl-tRNA + H2O = an N-acyl-L-amino acid + a tRNA + H(+). Hydrolyzes ribosome-free peptidyl-tRNAs (with 1 or more amino acids incorporated), which drop off the ribosome during protein synthesis, or as a result of ribosome stalling. In terms of biological role, catalyzes the release of premature peptidyl moieties from peptidyl-tRNA molecules trapped in stalled 50S ribosomal subunits, and thus maintains levels of free tRNAs and 50S ribosomes. This chain is Peptidyl-tRNA hydrolase, found in Campylobacter jejuni subsp. doylei (strain ATCC BAA-1458 / RM4099 / 269.97).